We begin with the raw amino-acid sequence, 61 residues long: Small ribosomal subunit protein uS14 (61 aa).

The Zn(2+) site is built by Cys-24, Cys-27, Cys-40, and Cys-43.

This sequence belongs to the universal ribosomal protein uS14 family. Zinc-binding uS14 subfamily. In terms of assembly, part of the 30S ribosomal subunit. Contacts proteins S3 and S10. Requires Zn(2+) as cofactor.

Functionally, binds 16S rRNA, required for the assembly of 30S particles and may also be responsible for determining the conformation of the 16S rRNA at the A site. The protein is Small ribosomal subunit protein uS14 of Borrelia garinii subsp. bavariensis (strain ATCC BAA-2496 / DSM 23469 / PBi) (Borreliella bavariensis).